A 161-amino-acid chain; its full sequence is Carboxysome assembly protein CcmN (161 aa).

The interval 111-140 (LLSAETPPTTATVSSSEPAGRSPQSSAIAH) is disordered. The segment covering 116-137 (TPPTTATVSSSEPAGRSPQSSA) has biased composition (polar residues). The Encapsulation peptide signature appears at 144–161 (VYGKEQFLRMRQSMFPDR).

It belongs to the CcmN family. In terms of assembly, interacts with CcmM via the N-terminus of CcmN. Interacts with CcmK2 via the 18 C-terminal residues.

It localises to the carboxysome. Functionally, required for carboxysome formation; the N-terminus interacts with CcmM which itself binds RuBisCO (ribulose bisphosphate carboxylase, rbcL-rbcS), while the C-terminal 18 residues interact with carboxysome shell protein CcmK2. Required for growth in normal air. Beta-carboxysome assembly initiates when soluble RuBisCO is condensed into a liquid matrix in a pre-carboxysome by the RbcS-like domains of probably both CcmM58 and CcmM35. CcmN interacts with the N-terminus of CcmM58, and then recruits the CcmK2 major shell protein via CcmN's encapsulation peptide. Shell formation requires CcmK proteins and CcmO. CcmL caps the otherwise elongated carboxysome. Once fully encapsulated carboxysomes are formed, they migrate within the cell probably via interactions with the cytoskeleton. The protein is Carboxysome assembly protein CcmN of Synechococcus elongatus (strain ATCC 33912 / PCC 7942 / FACHB-805) (Anacystis nidulans R2).